A 70-amino-acid polypeptide reads, in one-letter code: Conotoxin Ep11.12 (70 aa).

The first 26 residues, 1–26 (MMFRVTSVGCFLLVILSLNLVVLTNA), serve as a signal peptide directing secretion. Disulfide bonds link Cys-27/Cys-41, Cys-34/Cys-46, Cys-40/Cys-50, and Cys-45/Cys-54. Pro-57 bears the Proline amide mark. A propeptide spanning residues 61–70 (AKLREFFRQR) is cleaved from the precursor.

The protein belongs to the conotoxin I2 superfamily. As to expression, expressed by the venom duct.

The protein localises to the secreted. The sequence is that of Conotoxin Ep11.12 from Conus episcopatus (Bishop's cone).